The chain runs to 492 residues: Protein nucleotidyltransferase YdiU (492 aa).

8 residues coordinate ATP: Gly-101, Gly-103, Arg-104, Lys-124, Asp-136, Gly-137, Arg-187, and Arg-194. The active-site Proton acceptor is the Asp-268. Asn-269 and Asp-278 together coordinate Mg(2+). Asp-278 is a binding site for ATP.

This sequence belongs to the SELO family. Mg(2+) serves as cofactor. The cofactor is Mn(2+).

It catalyses the reaction L-seryl-[protein] + ATP = 3-O-(5'-adenylyl)-L-seryl-[protein] + diphosphate. The enzyme catalyses L-threonyl-[protein] + ATP = 3-O-(5'-adenylyl)-L-threonyl-[protein] + diphosphate. It carries out the reaction L-tyrosyl-[protein] + ATP = O-(5'-adenylyl)-L-tyrosyl-[protein] + diphosphate. The catalysed reaction is L-histidyl-[protein] + UTP = N(tele)-(5'-uridylyl)-L-histidyl-[protein] + diphosphate. It catalyses the reaction L-seryl-[protein] + UTP = O-(5'-uridylyl)-L-seryl-[protein] + diphosphate. The enzyme catalyses L-tyrosyl-[protein] + UTP = O-(5'-uridylyl)-L-tyrosyl-[protein] + diphosphate. Its function is as follows. Nucleotidyltransferase involved in the post-translational modification of proteins. It can catalyze the addition of adenosine monophosphate (AMP) or uridine monophosphate (UMP) to a protein, resulting in modifications known as AMPylation and UMPylation. The chain is Protein nucleotidyltransferase YdiU from Corynebacterium efficiens (strain DSM 44549 / YS-314 / AJ 12310 / JCM 11189 / NBRC 100395).